A 307-amino-acid polypeptide reads, in one-letter code: Taste receptor type 2 member 10 (307 aa).

At 1–6 (MLSVVE) the chain is on the extracellular side. Residues 7–27 (GILILVVISESVFGVLGNGFI) form a helical membrane-spanning segment. At 28-42 (GLVNCIDCAKNKLST) the chain is on the cytoplasmic side. The helical transmembrane segment at 43–63 (IGFILTGLAISRIFLIWIIIT) threads the bilayer. Topologically, residues 64–100 (DGFIQIFSPDVYASGNLIEYISYFWVITNQSSIWFAT) are extracellular. Asn-92 is a glycosylation site (N-linked (GlcNAc...) asparagine). Residues 101–121 (SLSIFYFLKIANFSNYIFLWL) traverse the membrane as a helical segment. Residues 122–126 (KSRIN) are Cytoplasmic-facing. Residues 127-147 (RVLPLLMGFLLISCLLNFAYI) form a helical membrane-spanning segment. The Extracellular segment spans residues 148 to 179 (VKILNDLKMKNDTVWRLNMYKSEYFIKQLLLN). The N-linked (GlcNAc...) asparagine glycan is linked to Asn-158. A helical transmembrane segment spans residues 180 to 200 (LGVIFFFTLSLITSVLLIISL). Residues 201–227 (WRHNRQMQSNVTGLRDSITEAHVKAMK) are Cytoplasmic-facing. A helical transmembrane segment spans residues 228-248 (VLISFIILFILYFIGIAIEIS). At 249-257 (YFTVPENKL) the chain is on the extracellular side. Residues 258–278 (LLIFGMTTTAIYPWGHSFILI) form a helical membrane-spanning segment. The Cytoplasmic segment spans residues 279–307 (LGNSKLKQASLRVLQQLKCCEERKNLRAT).

Belongs to the G-protein coupled receptor T2R family.

Its subcellular location is the membrane. Functionally, receptor that may play a role in the perception of bitterness and is gustducin-linked. May play a role in sensing the chemical composition of the gastrointestinal content. The activity of this receptor may stimulate alpha gustducin, mediate PLC-beta-2 activation and lead to the gating of TRPM5. The polypeptide is Taste receptor type 2 member 10 (TAS2R10) (Papio hamadryas (Hamadryas baboon)).